The chain runs to 312 residues: tRNA uridine(34) hydroxylase (312 aa).

The region spanning 123 to 217 (SDPEVLLIDT…YLEEVPQEQS (95 aa)) is the Rhodanese domain. Cys-177 (cysteine persulfide intermediate) is an active-site residue. Over residues 282-293 (ARERQKQIELAR) the composition is skewed to basic and acidic residues. The segment at 282-312 (ARERQKQIELARQRNQPHPLGRDPRQSTLEN) is disordered.

Belongs to the TrhO family.

The enzyme catalyses uridine(34) in tRNA + AH2 + O2 = 5-hydroxyuridine(34) in tRNA + A + H2O. Functionally, catalyzes oxygen-dependent 5-hydroxyuridine (ho5U) modification at position 34 in tRNAs. The polypeptide is tRNA uridine(34) hydroxylase (Pseudomonas aeruginosa (strain UCBPP-PA14)).